A 372-amino-acid chain; its full sequence is Alanine racemase (372 aa).

Residue lysine 33 is the Proton acceptor; specific for D-alanine of the active site. An N6-(pyridoxal phosphate)lysine modification is found at lysine 33. Residue arginine 131 coordinates substrate. Tyrosine 261 acts as the Proton acceptor; specific for L-alanine in catalysis. Methionine 309 contacts substrate.

The protein belongs to the alanine racemase family. Requires pyridoxal 5'-phosphate as cofactor.

The enzyme catalyses L-alanine = D-alanine. The protein operates within amino-acid biosynthesis; D-alanine biosynthesis; D-alanine from L-alanine: step 1/1. Functionally, catalyzes the interconversion of L-alanine and D-alanine. May also act on other amino acids. The sequence is that of Alanine racemase (alr) from Salinispora arenicola (strain CNS-205).